The following is a 403-amino-acid chain: S-adenosylmethionine synthase (403 aa).

Residue H16 coordinates ATP. D18 lines the Mg(2+) pocket. Residue E44 coordinates K(+). L-methionine is bound by residues E57 and Q110. Residues 110–120 (QSAHIAQGVDA) form a flexible loop region. Residues 175 to 177 (DSK), D253, 259 to 260 (RK), A276, and K280 contribute to the ATP site. Residue D253 participates in L-methionine binding. Residue K284 participates in L-methionine binding.

The protein belongs to the AdoMet synthase family. As to quaternary structure, homotetramer; dimer of dimers. The cofactor is Mg(2+). K(+) is required as a cofactor.

It localises to the cytoplasm. It carries out the reaction L-methionine + ATP + H2O = S-adenosyl-L-methionine + phosphate + diphosphate. It participates in amino-acid biosynthesis; S-adenosyl-L-methionine biosynthesis; S-adenosyl-L-methionine from L-methionine: step 1/1. In terms of biological role, catalyzes the formation of S-adenosylmethionine (AdoMet) from methionine and ATP. The overall synthetic reaction is composed of two sequential steps, AdoMet formation and the subsequent tripolyphosphate hydrolysis which occurs prior to release of AdoMet from the enzyme. In Erythrobacter litoralis (strain HTCC2594), this protein is S-adenosylmethionine synthase.